Consider the following 833-residue polypeptide: MSQMGLHPRRGLTGHWLQRFQPCLPLHTVQWRRLLLLAFLLSLAWPASPLPREEEIVFPEKLNGSSILPGSGVPARLLYRLPAFGEMLLLELEQDPGVQVEGLTVQYLGQAPEMLGGAEPGTYLTGTINGDPESVASLHWDGGALLGVLQYRGAELHLQPLEGGALNSAGGPGAHILRRKSPASSQGPMCTVKAPSGSPSPISRRTKRFASLSRFVETLVVADDKMAAFHGTGLKRYLLTVMAAAAKAFKHPSIRNPVNLVVTRLVILGSGQEGPQVGPSAAQTLRSFCTWQRGLNTPNDSDPDHFDTAILFTRQDLCGVSTCDTLGMADVGTVCDPARSCAIVEDDGLQSAFTAAHELGHVFNMLHDNSKPCTNLNGQGGSSRHVMAPVMAHVDPEEPWSPCSARFITDFLDNGYGHCLLDKPEAPLHLPATFPGKDYDADRQCQLTFGPDSSHCPQLPPPCAALWCSGHLNGHAMCQTKHSPWADGTPCGSSQACMGGRCLHVDQLKDFNVPQAGGWGPWGPWGDCSRTCGGGVQFSSRDCTRPVPRNGGKYCEGRRTRFRSCNTENCPHGSALTFREEQCAAYNHRTDLFKSFPGPMDWVPRYTGVAPRDQCKLTCQARALGYYYVLEPRVADGTPCSPDTSSVCVQGRCIHAGCDRIIGSKKKFDKCMVCGGDGSRCSKQSGSFKKFRYGYSDVVTIPAGATHILVRQQGGSGLKSIYLALKLSDGSYALNGEYTLMPSPTDVVLPGAVSLRYSGATAASETLSGHGPLAQPLTLQVLVAGNPQNARLRYSFFVPRPVPSTPRPPPQDWLQRRAEILKILRKRPWAGRK.

The first 49 residues, 1–49 (MSQMGLHPRRGLTGHWLQRFQPCLPLHTVQWRRLLLLAFLLSLAWPASP), serve as a signal peptide directing secretion. The propeptide occupies 50 to 208 (LPREEEIVFP…PSPISRRTKR (159 aa)). N-linked (GlcNAc...) asparagine glycosylation is present at asparagine 63. Residues 180-204 (KSPASSQGPMCTVKAPSGSPSPISR) form a disordered region. A Cysteine switch motif is present at residues 188-195 (PMCTVKAP). A Zn(2+)-binding site is contributed by cysteine 190. Positions 214-424 (RFVETLVVAD…GYGHCLLDKP (211 aa)) constitute a Peptidase M12B domain. 11 cysteine pairs are disulfide-bonded: cysteine 289–cysteine 341, cysteine 318–cysteine 323, cysteine 335–cysteine 419, cysteine 373–cysteine 403, cysteine 445–cysteine 468, cysteine 456–cysteine 478, cysteine 463–cysteine 497, cysteine 491–cysteine 502, cysteine 528–cysteine 565, cysteine 532–cysteine 570, and cysteine 543–cysteine 555. Asparagine 299 is a glycosylation site (N-linked (GlcNAc...) asparagine). Histidine 357 contacts Zn(2+). Glutamate 358 is an active-site residue. Positions 361 and 367 each coordinate Zn(2+). The region spanning 433 to 515 (TFPGKDYDAD…DQLKDFNVPQ (83 aa)) is the Disintegrin domain. The region spanning 516–571 (AGGWGPWGPWGDCSRTCGGGVQFSSRDCTRPVPRNGGKYCEGRRTRFRSCNTENCP) is the TSP type-1 domain. The tract at residues 682 to 833 (SKQSGSFKKF…LRKRPWAGRK (152 aa)) is spacer.

As to quaternary structure, interacts with SRPX2. Requires Zn(2+) as cofactor. Post-translationally, the precursor is cleaved by a furin endopeptidase. Glycosylated. Can be O-fucosylated by POFUT2 on a serine or a threonine residue found within the consensus sequence C1-X(2)-(S/T)-C2-G of the TSP type-1 repeat domains where C1 and C2 are the first and second cysteine residue of the repeat, respectively. Fucosylated repeats can then be further glycosylated by the addition of a beta-1,3-glucose residue by the glucosyltransferase, B3GALTL. Fucosylation mediates the efficient secretion of ADAMTS family members. Can also be C-glycosylated with one or two mannose molecules on tryptophan residues within the consensus sequence W-X-X-W of the TPRs, and N-glycosylated. These other glycosylations can also facilitate secretion.

The protein localises to the secreted. Its subcellular location is the extracellular space. It is found in the extracellular matrix. It catalyses the reaction Glutamyl endopeptidase. Bonds cleaved include 370-Thr-Glu-Gly-Glu-|-Ala-Arg-Gly-Ser-377 in the interglobular domain of mammalian aggrecan.. Functionally, cleaves aggrecan, a cartilage proteoglycan, at the '392-Glu-|-Ala-393' site and may be involved in its turnover. Also cleaves COMP. May play an important role in the destruction of aggrecan in arthritic diseases. The sequence is that of A disintegrin and metalloproteinase with thrombospondin motifs 4 (Adamts4) from Mus musculus (Mouse).